The sequence spans 249 residues: MFSSLRLAISFLTIFPFYNKMADNKELAQSVSYYPLVGFLLGSIAAGVCYAMHSIGLNLAADVLGLVTIITLTGGLHQDGLMDTADGIFSGRELHRKLEIMKDSRVGAMGVIALATVLLLKIAFLFELDLAQKLTAFIMAPMAGRWAMVLAITRYPYARATGGLGACLKQAGKTQLALATLILVAGCLWLFGLPGLALLGIVFFITWLTVEFIVKRLGGMTGDTYGALGEMIETWVIFLILLGQQIRML.

Helical transmembrane passes span 36–56 (LVGFLLGSIAAGVCYAMHSIG), 57–77 (LNLAADVLGLVTIITLTGGLH), 106–126 (VGAMGVIALATVLLLKIAFLF), 133–153 (KLTAFIMAPMAGRWAMVLAIT), 188–208 (LWLFGLPGLALLGIVFFITWL), and 226–246 (GALGEMIETWVIFLILLGQQI).

Belongs to the CobS family. It depends on Mg(2+) as a cofactor.

Its subcellular location is the cell membrane. The catalysed reaction is alpha-ribazole + adenosylcob(III)inamide-GDP = adenosylcob(III)alamin + GMP + H(+). The enzyme catalyses alpha-ribazole 5'-phosphate + adenosylcob(III)inamide-GDP = adenosylcob(III)alamin 5'-phosphate + GMP + H(+). It participates in cofactor biosynthesis; adenosylcobalamin biosynthesis; adenosylcobalamin from cob(II)yrinate a,c-diamide: step 7/7. Its function is as follows. Joins adenosylcobinamide-GDP and alpha-ribazole to generate adenosylcobalamin (Ado-cobalamin). Also synthesizes adenosylcobalamin 5'-phosphate from adenosylcobinamide-GDP and alpha-ribazole 5'-phosphate. The chain is Adenosylcobinamide-GDP ribazoletransferase from Desulforamulus reducens (strain ATCC BAA-1160 / DSM 100696 / MI-1) (Desulfotomaculum reducens).